The following is a 220-amino-acid chain: Orotate phosphoribosyltransferase (220 aa).

K26 serves as a coordination point for 5-phospho-alpha-D-ribose 1-diphosphate. Residue 34-35 participates in orotate binding; sequence FF. Residues 72–73, R101, K102, K105, H107, and 126–134 each bind 5-phospho-alpha-D-ribose 1-diphosphate; these read YK and DDVITAGTS. Residues T130 and R158 each coordinate orotate.

Belongs to the purine/pyrimidine phosphoribosyltransferase family. PyrE subfamily. Homodimer. Requires Mg(2+) as cofactor.

The enzyme catalyses orotidine 5'-phosphate + diphosphate = orotate + 5-phospho-alpha-D-ribose 1-diphosphate. It participates in pyrimidine metabolism; UMP biosynthesis via de novo pathway; UMP from orotate: step 1/2. Its function is as follows. Catalyzes the transfer of a ribosyl phosphate group from 5-phosphoribose 1-diphosphate to orotate, leading to the formation of orotidine monophosphate (OMP). The protein is Orotate phosphoribosyltransferase of Bordetella avium (strain 197N).